Reading from the N-terminus, the 352-residue chain is MGDWEFLEKLLDQVQEHSTSIGKIWLMVLFIFRILILGLAGESVWGDEQSDFTCNTEQPGCTNVCYDKAFPISHVRYWVLQFLFVSTPTLFYLGHVIYLSRKEEKLKQKESELRALDDKEQVEQAIAIIEKKKLKLYIQEDGTVKIKGALMYTYLTSVIFKSIFEAGFLLGQWYLYGFVMTPIYVCERVPCPHKVDCFVSRPMEKTIFIIFMLVVSLISLFLNVLELIHLICKSMIHALKKYSQYIPANRYPKNEDTYPEKTSETATAPFQDKSYIYLPMNENISYPQYKMPNEQNWVNFNTEQQLAISGNTQSPLGHYSLSAFLPVSPKTHSTVEKASTRASSSASKKQYV.

Over 2-23 (GDWEFLEKLLDQVQEHSTSIGK) the chain is Cytoplasmic. A helical membrane pass occupies residues 24 to 46 (IWLMVLFIFRILILGLAGESVWG). The Extracellular portion of the chain corresponds to 47–76 (DEQSDFTCNTEQPGCTNVCYDKAFPISHVR). The chain crosses the membrane as a helical span at residues 77–99 (YWVLQFLFVSTPTLFYLGHVIYL). The Cytoplasmic portion of the chain corresponds to 100 to 153 (SRKEEKLKQKESELRALDDKEQVEQAIAIIEKKKLKLYIQEDGTVKIKGALMYT). Residues 154–176 (YLTSVIFKSIFEAGFLLGQWYLY) form a helical membrane-spanning segment. The Extracellular portion of the chain corresponds to 177–208 (GFVMTPIYVCERVPCPHKVDCFVSRPMEKTIF). A helical transmembrane segment spans residues 209–231 (IIFMLVVSLISLFLNVLELIHLI). The Cytoplasmic segment spans residues 232 to 352 (CKSMIHALKK…SSSASKKQYV (121 aa)). Positions 332-352 (HSTVEKASTRASSSASKKQYV) are disordered. Residues 340 to 352 (TRASSSASKKQYV) are compositionally biased toward low complexity.

It belongs to the connexin family. Alpha-type (group II) subfamily. In terms of assembly, a connexon is composed of a hexamer of connexins. In terms of tissue distribution, expressed in ovarian somatic cells, heart, leg muscle, liver and eye but not in brain.

The protein localises to the cell membrane. It localises to the cell junction. The protein resides in the gap junction. Its function is as follows. One gap junction consists of a cluster of closely packed pairs of transmembrane channels, the connexons, through which materials of low MW diffuse from one cell to a neighboring cell. This Xenopus laevis (African clawed frog) protein is Gap junction alpha-4 protein (gja4).